The following is a 474-amino-acid chain: 6-phospho-beta-galactosidase (474 aa).

D-galactose 6-phosphate is bound by residues glutamine 19, histidine 116, asparagine 159, glutamate 160, and asparagine 297. The Proton donor role is filled by glutamate 160. The active-site Nucleophile is glutamate 375. Residues serine 433, tryptophan 434, lysine 440, and tyrosine 442 each coordinate D-galactose 6-phosphate.

The protein belongs to the glycosyl hydrolase 1 family.

The enzyme catalyses a 6-phospho-beta-D-galactoside + H2O = D-galactose 6-phosphate + an alcohol. It participates in carbohydrate metabolism; lactose degradation; D-galactose 6-phosphate and beta-D-glucose from lactose 6-phosphate: step 1/1. The chain is 6-phospho-beta-galactosidase from Lacticaseibacillus casei (strain BL23) (Lactobacillus casei).